Consider the following 211-residue polypeptide: High mobility group protein B1-like 1 (211 aa).

Lys-3, Lys-7, Lys-8, Lys-12, Lys-28, Lys-29, and Lys-30 each carry N6-acetyllysine. The segment at residues 9–79 (PRGKMSSYAF…HYERQMKTYI (71 aa)) is a DNA-binding region (HMG box 1). The interval 71–96 (YERQMKTYIPPKGETKKKFKDPNAPK) is disordered. Over residues 83–94 (GETKKKFKDPNA) the composition is skewed to basic and acidic residues. Positions 95–163 (PKRPPSAFFL…KYEKDIAAYQ (69 aa)) form a DNA-binding region, HMG box 2. N6-acetyllysine is present on residues Lys-127, Lys-128, Lys-172, Lys-173, Lys-177, Lys-180, Lys-182, Lys-183, Lys-184, and Lys-185. A disordered region spans residues 161–211 (AYQAKGKPEAAKKGVVKAEKSKKKKEEEEDEEDEEDEEEEDEEDEEDDDDE). Residues 166–179 (GKPEAAKKGVVKAE) show a composition bias toward basic and acidic residues. Positions 187–211 (EEEDEEDEEDEEEEDEEDEEDDDDE) are enriched in acidic residues.

It belongs to the HMGB family.

The protein resides in the nucleus. Its subcellular location is the chromosome. In terms of biological role, binds preferentially single-stranded DNA and unwinds double-stranded DNA. This is High mobility group protein B1-like 1 (HMGB1P1) from Homo sapiens (Human).